Reading from the N-terminus, the 175-residue chain is DDB1- and CUL4-associated factor 16 (175 aa).

Positions 1 to 42 (MGPRNPSPDPLSESESEEEENTNYLNESSGEEWDSSEEEDPV) are disordered. Composition is skewed to acidic residues over residues 12–21 (SESESEEEEN) and 29–41 (SGEE…EEDP). N6-acetyllysine is present on lysine 61.

Interacts with DDB1 and CUL4A.

The protein resides in the nucleus. It functions in the pathway protein modification; protein ubiquitination. Functions as a substrate recognition component for CUL4-DDB1 E3 ubiquitin-protein ligase complex, which mediates ubiquitination and proteasome-dependent degradation of nuclear proteins. The polypeptide is DDB1- and CUL4-associated factor 16 (DCAF16) (Bos taurus (Bovine)).